A 123-amino-acid chain; its full sequence is MPASRLVPLGAVLLLGLLLLLELPPVTGTGADKPGVCPQLSADLNCTQDCRADQDCAENLKCCRAGCSAICSIPNEKEGSCPSIDFPQLGICQDLCQVDSQCPGKMKCCLNGCGKVSCVTPNF.

Positions 1–28 (MPASRLVPLGAVLLLGLLLLLELPPVTG) are cleaved as a signal peptide. WAP domains lie at 30 to 71 (GADK…SAIC) and 74 to 122 (PNEK…VTPN). Intrachain disulfides connect cysteine 37-cysteine 63, cysteine 46-cysteine 67, cysteine 50-cysteine 62, cysteine 56-cysteine 71, cysteine 81-cysteine 109, cysteine 92-cysteine 113, cysteine 96-cysteine 108, and cysteine 102-cysteine 118. N-linked (GlcNAc...) asparagine glycosylation is present at asparagine 45.

Homotrimer; disulfide-linked. Epididymis.

It localises to the secreted. In terms of biological role, broad range protease inhibitor. This is WAP four-disulfide core domain protein 2 (WFDC2) from Oryctolagus cuniculus (Rabbit).